A 264-amino-acid chain; its full sequence is tRNA pseudouridine synthase A (264 aa).

D51 functions as the Nucleophile in the catalytic mechanism. Position 109 (Y109) interacts with substrate.

Belongs to the tRNA pseudouridine synthase TruA family. As to quaternary structure, homodimer.

It carries out the reaction uridine(38/39/40) in tRNA = pseudouridine(38/39/40) in tRNA. Formation of pseudouridine at positions 38, 39 and 40 in the anticodon stem and loop of transfer RNAs. The protein is tRNA pseudouridine synthase A of Polaromonas naphthalenivorans (strain CJ2).